The primary structure comprises 111 residues: uncharacterized protein (111 aa).

2 helical membrane passes run L7–Y29 and P49–L71.

Its subcellular location is the membrane. This is an uncharacterized protein from Saccharomyces cerevisiae (strain ATCC 204508 / S288c) (Baker's yeast).